The following is a 471-amino-acid chain: Thiohydroximate-O-sulfate sulfur/sulfate-lyase (nitrile-forming) NSP2 (471 aa).

The 143-residue stretch at 2–144 (VQKVEARGGE…LHSLGAYISS (143 aa)) folds into the Jacalin-type lectin domain. Kelch repeat units follow at residues 178–226 (KIFS…VRMV), 231–277 (SLYV…SMTA), 281–330 (NVYV…VVQG), 332–379 (VWVV…VVGK), 381–435 (ILVF…GWSA), and 446–471 (GLVM…VDSA). Arg238 serves as the catalytic Proton donor. Residues Arg238, Ser271, Arg293, Gly322, and Val371 each coordinate a (Z)-N-(sulfonatooxy)alkanimidothioate. Arg293 serves as the catalytic Proton donor. Positions 387, 391, and 395 each coordinate Fe(2+). Residue Trp433 participates in a (Z)-N-(sulfonatooxy)alkanimidothioate binding.

This sequence belongs to the jacalin lectin family. Fe(2+) serves as cofactor. In terms of tissue distribution, expressed only in seeds.

The catalysed reaction is a (Z)-N-(sulfonatooxy)alkanimidothioate = a nitrile + sulfur + sulfate. The enzyme catalyses (Z)-phenyl-N-(sulfonatooxy)methanimidothioate = phenylacetonitrile + sulfur + sulfate. It catalyses the reaction (Z)-N-(sulfonatooxy)prop-2-enimidothioate = but-3-enenitrile + sulfur + sulfate. It carries out the reaction (Z)-(indol-3-yl)-N-(sulfonatooxy)methanimidothioate = (indol-3-yl)acetonitrile + sulfur + sulfate. Its activity is regulated as follows. The presence of Fe(2+) supports lyase activity in a dose-dependent manner with both benzylglucosinolate and 2-propenylglucosinolate as substrates. More active at pH 7.4 than at pH 6. Its function is as follows. Specifier protein responsible for constitutive and herbivore-induced simple nitrile formation, especially in seeds. Promotes simple nitriles, but not epithionitrile or thiocyanate formation. Converts allylglucosinolate (allyl-GSL), 2-propenylglucosinolate (sinigrin), indol-3-ylmethylglucosinolate (glucobrassicin), benzylisothiocyanate and benzylglucosinolate (glucotropaeolin) to their corresponding simple nitriles in the presence of myrosinase. Catalyzes mainly the conversion of benzylisothiocyanate when benzylglucosinolate is used as the initial substrate of myrosinase. Involved in the regulation of glucosinolate content in seeds, during stratification and germination. The polypeptide is Thiohydroximate-O-sulfate sulfur/sulfate-lyase (nitrile-forming) NSP2 (Arabidopsis thaliana (Mouse-ear cress)).